The sequence spans 139 residues: Prostate-associated microseminoprotein (139 aa).

The first 35 residues, 1 to 35 (MALRMLWAGQAKGILGGWRTICLVVSLFLQHPGVS), serve as a signal peptide directing secretion. 5 disulfide bridges follow: cysteine 38–cysteine 78, cysteine 46–cysteine 69, cysteine 64–cysteine 100, cysteine 67–cysteine 77, and cysteine 91–cysteine 114. A disordered region spans residues 116–139 (GGGPDLEWGSANTPAPGASAPHSS).

Belongs to the beta-microseminoprotein family.

It is found in the secreted. Functionally, acts as a ligand for C-C chemokine receptor CCR2. Signals through binding and activation of CCR2 and induces a strong chemotactic response and mobilization of intracellular calcium ions. Exhibits a chemotactic activity for monocytes and lymphocytes but not neutrophils. The sequence is that of Prostate-associated microseminoprotein (Msmp) from Mus musculus (Mouse).